The following is a 366-amino-acid chain: Variable large protein 10 (366 aa).

The first 18 residues, 1–18 (MRKRISAIIMTLFMVLAS), serve as a signal peptide directing secretion. The N-palmitoyl cysteine moiety is linked to residue Cys19. The S-diacylglycerol cysteine moiety is linked to residue Cys19.

It belongs to the variable large protein (Vlp) family. Beta subfamily.

It is found in the cell outer membrane. The Vlp and Vsp proteins are antigenically distinct proteins, only one vlp or vsp gene is transcriptionally active at any one time. Switching between these genes is a mechanism of host immune response evasion. The polypeptide is Variable large protein 10 (Borrelia hermsii).